We begin with the raw amino-acid sequence, 27 residues long: Pregnancy-associated glycoprotein 59 (27 aa).

This sequence belongs to the peptidase A1 family. In terms of processing, glycosylated. Placenta.

This Capra hircus (Goat) protein is Pregnancy-associated glycoprotein 59 (PAG59).